The sequence spans 431 residues: tRNA(Ile)-lysidine synthase (431 aa).

26-31 is a binding site for ATP; sequence SGGIDS.

The protein belongs to the tRNA(Ile)-lysidine synthase family.

The protein resides in the cytoplasm. It catalyses the reaction cytidine(34) in tRNA(Ile2) + L-lysine + ATP = lysidine(34) in tRNA(Ile2) + AMP + diphosphate + H(+). In terms of biological role, ligates lysine onto the cytidine present at position 34 of the AUA codon-specific tRNA(Ile) that contains the anticodon CAU, in an ATP-dependent manner. Cytidine is converted to lysidine, thus changing the amino acid specificity of the tRNA from methionine to isoleucine. This chain is tRNA(Ile)-lysidine synthase, found in Wolbachia sp. subsp. Brugia malayi (strain TRS).